The following is a 245-amino-acid chain: MDLENFLLGIPIVTRYWFLASTIIPLLGRFGFINVQWMFLQWDLVVNKFQFWRPLTALIYYPVTPQTGFHWLMMCYFLYNYSKALESETYRGRSADYLFMLIFNWFFCSGLCMALDIYFLLEPMVISVLYVWCQVNKDTIVSFWFGMRFPARYLPWVLWGFNAVLRGGGTNELVGILVGHAYFFVALKYPDEYGVDLISTPEFLHRLIPDEDGGIHGQDGNIRGARQQPRGHQWPGGVGARLGGN.

Over 1-5 the chain is Cytoplasmic; that stretch reads MDLEN. A helical membrane pass occupies residues 6 to 26; the sequence is FLLGIPIVTRYWFLASTIIPL. Residues 27–57 lie on the Lumenal side of the membrane; it reads LGRFGFINVQWMFLQWDLVVNKFQFWRPLTA. Residues 58–78 form a helical membrane-spanning segment; the sequence is LIYYPVTPQTGFHWLMMCYFL. At 79 to 100 the chain is on the cytoplasmic side; that stretch reads YNYSKALESETYRGRSADYLFM. A helical membrane pass occupies residues 101–121; sequence LIFNWFFCSGLCMALDIYFLL. Over 122 to 166 the chain is Lumenal; it reads EPMVISVLYVWCQVNKDTIVSFWFGMRFPARYLPWVLWGFNAVLR. A helical membrane pass occupies residues 167-187; that stretch reads GGGTNELVGILVGHAYFFVAL. Over 188-245 the chain is Cytoplasmic; the sequence is KYPDEYGVDLISTPEFLHRLIPDEDGGIHGQDGNIRGARQQPRGHQWPGGVGARLGGN. A disordered region spans residues 218–245; sequence QDGNIRGARQQPRGHQWPGGVGARLGGN. The span at 234-245 shows a compositional bias: gly residues; the sequence is WPGGVGARLGGN.

This sequence belongs to the derlin family.

The protein resides in the endoplasmic reticulum membrane. Specifically required for the degradation process of misfolded endoplasmic reticulum (ER) luminal proteins. Participates in the transfer of misfolded proteins from the ER to the cytosol, where they are destroyed by the proteasome in a ubiquitin-dependent manner. The protein is Derlin-1 of Caenorhabditis elegans.